The chain runs to 879 residues: Alanine--tRNA ligase (879 aa).

4 residues coordinate Zn(2+): His566, His570, Cys668, and His672.

This sequence belongs to the class-II aminoacyl-tRNA synthetase family. The cofactor is Zn(2+).

The protein localises to the cytoplasm. The enzyme catalyses tRNA(Ala) + L-alanine + ATP = L-alanyl-tRNA(Ala) + AMP + diphosphate. Its function is as follows. Catalyzes the attachment of alanine to tRNA(Ala) in a two-step reaction: alanine is first activated by ATP to form Ala-AMP and then transferred to the acceptor end of tRNA(Ala). Also edits incorrectly charged Ser-tRNA(Ala) and Gly-tRNA(Ala) via its editing domain. This Clostridium kluyveri (strain ATCC 8527 / DSM 555 / NBRC 12016 / NCIMB 10680 / K1) protein is Alanine--tRNA ligase.